Consider the following 260-residue polypeptide: Phosphatidate cytidylyltransferase (260 aa).

Transmembrane regions (helical) follow at residues 9–29 (IIALIVFLPILLKGGLVLMIF), 46–66 (MIKFVSVPGLISAVGLIIIML), 70–90 (AGPWVQVIQLKSLIAMSFIVL), 102–122 (FMDAAFCLMSVAYVGIGFMFF), 130–150 (LHYILYAFLIVWLTDTGAYLF), 172–192 (FIGGLFCSLIVPLAMLYFVDF), and 196–216 (VWILLGVTLILSLFGQLGDLV).

The protein belongs to the CDS family.

The protein localises to the cell membrane. It carries out the reaction a 1,2-diacyl-sn-glycero-3-phosphate + CTP + H(+) = a CDP-1,2-diacyl-sn-glycerol + diphosphate. It participates in phospholipid metabolism; CDP-diacylglycerol biosynthesis; CDP-diacylglycerol from sn-glycerol 3-phosphate: step 3/3. The sequence is that of Phosphatidate cytidylyltransferase (cdsA) from Staphylococcus aureus (strain COL).